Here is a 366-residue protein sequence, read N- to C-terminus: MNKVILYCRPGFEKECAAEITDKAGRRDIYGFVRVKDNSGYVIFECYQHEDADRLVRELPFRDLIFARQMMVCGELLRDLPPEDRITPIVGMLTGVVERAGELRVEVPDTNECKELMKFCRKFTVPLRTALRNDKILQAQEKPNRPVVHVLFIAPGCCYVGYSYSNNHSPFYMGIPRLKFPSDAPSRSTLKLEEAFHVFIPADEWDERLGSGMYAVDLGACPGGWTYQLVKRSMMVHAVDNGMMAQSLMDTGQVIHHQADGFRFEPPRNNIYWLVCDMVEKPAKVTSRMADWLVNGWCREAIFNLKLPMKKRYEEVALNLEKLTQRLQEGGINAEIHAKQLYHDREEVTVHVRRIWSAIPGRRDER.

S-adenosyl-L-methionine contacts are provided by residues Ser-188, 221 to 224, Asp-240, Asp-260, and Asp-277; that span reads CPGG. The active-site Proton acceptor is Lys-306.

The protein belongs to the class I-like SAM-binding methyltransferase superfamily. RNA methyltransferase RlmE family. RlmM subfamily. As to quaternary structure, monomer.

Its subcellular location is the cytoplasm. The enzyme catalyses cytidine(2498) in 23S rRNA + S-adenosyl-L-methionine = 2'-O-methylcytidine(2498) in 23S rRNA + S-adenosyl-L-homocysteine + H(+). Functionally, catalyzes the 2'-O-methylation at nucleotide C2498 in 23S rRNA. This is Ribosomal RNA large subunit methyltransferase M from Musicola paradisiaca (strain Ech703) (Dickeya paradisiaca).